Here is a 647-residue protein sequence, read N- to C-terminus: Acetyl-coenzyme A synthetase (647 aa).

Residues 189 to 192, Thr-307, and Asn-331 contribute to the CoA site; that span reads RGGK. ATP is bound by residues 383–385, 407–412, Asp-496, and Arg-511; these read GEP and DTWWQT. Residue Ser-519 participates in CoA binding. ATP is bound at residue Arg-522. The Mg(2+) site is built by His-535 and Val-538. Arg-580 is a CoA binding site. Lys-605 bears the N6-acetyllysine mark.

It belongs to the ATP-dependent AMP-binding enzyme family. Mg(2+) is required as a cofactor. In terms of processing, acetylated. Deacetylation by the SIR2-homolog deacetylase activates the enzyme.

The catalysed reaction is acetate + ATP + CoA = acetyl-CoA + AMP + diphosphate. Catalyzes the conversion of acetate into acetyl-CoA (AcCoA), an essential intermediate at the junction of anabolic and catabolic pathways. AcsA undergoes a two-step reaction. In the first half reaction, AcsA combines acetate with ATP to form acetyl-adenylate (AcAMP) intermediate. In the second half reaction, it can then transfer the acetyl group from AcAMP to the sulfhydryl group of CoA, forming the product AcCoA. This chain is Acetyl-coenzyme A synthetase, found in Syntrophus aciditrophicus (strain SB).